Reading from the N-terminus, the 187-residue chain is BCL2/adenovirus E1B 19 kDa protein-interacting protein 3 (187 aa).

Positions 42–86 are disordered; the sequence is LDAQHESGRSSSKSSHCDSPPRSQTPQDTNRAEIDSHSFGEKNST. Phosphoserine occurs at positions 48, 60, 77, 79, 85, and 88. Positions 50 to 63 are enriched in low complexity; the sequence is RSSSKSSHCDSPPR. Residues 71–81 show a composition bias toward basic and acidic residues; the sequence is NRAEIDSHSFG. The BH3 signature appears at 93 to 118; the sequence is IERRREVESILKKNSDWIWDWSSRPE. Residues 157-177 form a helical membrane-spanning segment; it reads VFLPSLLLSHLLAIGLGIYIG.

The protein belongs to the NIP3 family. In terms of assembly, homodimer. Binds to BCL2. Interacts with BNIP3L and ACAA2. Interacts (via BH3 domain) with SPATA18 (via coiled-coil domains). Interacts with BOK; promotes BOK oligomerization. Interacts with PPTC7; this interaction promotes BNIP3 degradation.

The protein localises to the mitochondrion. Its subcellular location is the mitochondrion outer membrane. In terms of biological role, apoptosis-inducing protein that can overcome BCL2 suppression. May play a role in repartitioning calcium between the two major intracellular calcium stores in association with BCL2. Involved in mitochondrial quality control via its interaction with SPATA18/MIEAP: in response to mitochondrial damage, participates in mitochondrial protein catabolic process (also named MALM) leading to the degradation of damaged proteins inside mitochondria. The physical interaction of SPATA18/MIEAP, BNIP3 and BNIP3L/NIX at the mitochondrial outer membrane may play a critical role in the translocation of lysosomal proteins from the cytoplasm to the mitochondrial matrix. The physical interaction of SPATA18/MIEAP, BNIP3 and BNIP3L/NIX at the mitochondrial outer membrane regulates the opening of a pore in the mitochondrial double membrane in order to mediate the translocation of lysosomal proteins from the cytoplasm to the mitochondrial matrix. Plays an important role in the calprotectin (S100A8/A9)-induced cell death pathway. In Mus musculus (Mouse), this protein is BCL2/adenovirus E1B 19 kDa protein-interacting protein 3.